Reading from the N-terminus, the 122-residue chain is Acidic phospholipase A2 (122 aa).

7 cysteine pairs are disulfide-bonded: C26/C115, C28/C44, C43/C95, C49/C122, C50/C88, C57/C81, and C75/C86. Ca(2+)-binding residues include Y27, G29, and G31. The active site involves H47. D48 provides a ligand contact to Ca(2+). The active site involves D89.

The protein belongs to the phospholipase A2 family. Group II subfamily. D49 sub-subfamily. The cofactor is Ca(2+). In terms of processing, contains 7 disulfide bonds. Expressed by the venom gland.

It localises to the secreted. It carries out the reaction a 1,2-diacyl-sn-glycero-3-phosphocholine + H2O = a 1-acyl-sn-glycero-3-phosphocholine + a fatty acid + H(+). Functionally, snake venom phospholipase A2 (PLA2) that displays low systemic toxicity and causes severe symptoms only at very high concentrations (15 mg/kg). Has neither coagulant nor anticoagulant activity. PLA2 catalyzes the calcium-dependent hydrolysis of the 2-acyl groups in 3-sn-phosphoglycerides. The sequence is that of Acidic phospholipase A2 from Bothrops ammodytoides (Yararanata).